Consider the following 184-residue polypeptide: Potassium-transporting ATPase KdpC subunit (184 aa).

A helical transmembrane segment spans residues 10–30 (LTFLMVVLFAVIYPLAIYGIA).

This sequence belongs to the KdpC family. As to quaternary structure, the system is composed of three essential subunits: KdpA, KdpB and KdpC.

The protein localises to the cell inner membrane. Functionally, part of the high-affinity ATP-driven potassium transport (or Kdp) system, which catalyzes the hydrolysis of ATP coupled with the electrogenic transport of potassium into the cytoplasm. This subunit acts as a catalytic chaperone that increases the ATP-binding affinity of the ATP-hydrolyzing subunit KdpB by the formation of a transient KdpB/KdpC/ATP ternary complex. The protein is Potassium-transporting ATPase KdpC subunit of Flavobacterium psychrophilum (strain ATCC 49511 / DSM 21280 / CIP 103535 / JIP02/86).